We begin with the raw amino-acid sequence, 226 residues long: MKVKKHRFPGVYIVIDDDGSEKIATKNLVPGQRVYGERVIKFEGEEYRIWNPSRSKLGAAILNGLKNFPIKPGSTVLYLGIASGTTASHVSDIVGWEGKIFGVEFSPRVLRELVPIVEERRNIVPILGDATKPEGYRALVPKVDVIFEDVAQPTQAKILIDNAKVFLKSGGYGMISVKSRSIDVTKEPEEVFKEVERELASYFEVVERLSLEPYEKDHALFVVRKP.

Residues 85-86, 104-105, 129-130, and 149-152 each bind S-adenosyl-L-methionine; these read TT, EF, DA, and DVAQ.

Belongs to the methyltransferase superfamily. Fibrillarin family. As to quaternary structure, interacts with nop5. Component of box C/D small ribonucleoprotein (sRNP) particles that contain rpl7ae, FlpA and nop5, plus a guide RNA.

In terms of biological role, involved in pre-rRNA and tRNA processing. Utilizes the methyl donor S-adenosyl-L-methionine to catalyze the site-specific 2'-hydroxyl methylation of ribose moieties in rRNA and tRNA. Site specificity is provided by a guide RNA that base pairs with the substrate. Methylation occurs at a characteristic distance from the sequence involved in base pairing with the guide RNA. The sequence is that of Fibrillarin-like rRNA/tRNA 2'-O-methyltransferase from Thermococcus gammatolerans (strain DSM 15229 / JCM 11827 / EJ3).